Here is a 287-residue protein sequence, read N- to C-terminus: Energy-coupling factor transporter ATP-binding protein EcfA1 (287 aa).

The ABC transporter domain occupies 6–248 (IVAEGVSYAY…ADRIRALRLD (243 aa)). Residue 47-54 (GMNGSGKS) coordinates ATP.

Belongs to the ABC transporter superfamily. Energy-coupling factor EcfA family. In terms of assembly, forms a stable energy-coupling factor (ECF) transporter complex composed of 2 membrane-embedded substrate-binding proteins (S component), 2 ATP-binding proteins (A component) and 2 transmembrane proteins (T component).

The protein resides in the cell membrane. Its function is as follows. ATP-binding (A) component of a common energy-coupling factor (ECF) ABC-transporter complex. Unlike classic ABC transporters this ECF transporter provides the energy necessary to transport a number of different substrates. This chain is Energy-coupling factor transporter ATP-binding protein EcfA1, found in Symbiobacterium thermophilum (strain DSM 24528 / JCM 14929 / IAM 14863 / T).